Here is a 593-residue protein sequence, read N- to C-terminus: Serine/threonine-protein kinase PAK 4 (593 aa).

The region spanning 11–24 (ISAPSNFEHRVHTG) is the CRIB domain. The interval 25–322 (FDQHEQKFTG…VVDPGDPRSY (298 aa)) is linker. The residue at position 41 (Ser-41) is a Phosphoserine. Lys-78 carries the N6-methyllysine modification. Residues 95-303 (TRSNSLRRES…PQREPQRVSH (209 aa)) are disordered. Ser-104 is subject to Phosphoserine. Positions 118–133 (LEERAAPARMAPDKAG) are enriched in basic and acidic residues. Phosphoserine is present on Ser-148. Residues 149 to 164 (GDRRRVGPEKRPKSSR) show a composition bias toward basic and acidic residues. Phosphoserine is present on Ser-181. The segment covering 184–197 (DVSTPQPGSLTSGT) has biased composition (polar residues). Phosphothreonine is present on Thr-187. Ser-195 is subject to Phosphoserine. Phosphothreonine is present on Thr-207. Over residues 238–258 (AAPQSSSSSRPPTRARGAPSP) the composition is skewed to low complexity. Ser-257 and Ser-266 each carry phosphoserine. The span at 267-280 (EPQLAPPARALAAP) shows a compositional bias: low complexity. Pro residues predominate over residues 281–292 (AVPPAPGPPGPR). Position 293 is a phosphoserine (Ser-293). A compositionally biased stretch (basic and acidic residues) spans 294-303 (PQREPQRVSH). The 252-residue stretch at 323-574 (LDNFIKIGEG…AAELLKHPFL (252 aa)) folds into the Protein kinase domain. Residues 329–337 (IGEGSTGIV) and Lys-352 each bind ATP. The Proton acceptor role is filled by Asp-442. Ser-476 carries the phosphoserine; by autocatalysis modification.

This sequence belongs to the protein kinase superfamily. STE Ser/Thr protein kinase family. STE20 subfamily. As to quaternary structure, interacts tightly with GTP-bound but not GDP-bound CDC42/p21 and weakly with RAC1. Interacts with FGFR2 and GRB2. Interacts with INKA1. Interacts with SH3RF2. Interacts with RHOU and PAXI; the PAK4-RHOU complex protects RHOU from ubiquitination and acts as a scaffold to suppport paxillin/PAXI phosphorylation. Post-translationally, autophosphorylated on serine residues when activated by CDC42/p21. Phosphorylated on tyrosine residues upon stimulation of FGFR2. Methylated by SETD6. Polyubiquitinated, leading to its proteasomal degradation.

It localises to the cytoplasm. It catalyses the reaction L-seryl-[protein] + ATP = O-phospho-L-seryl-[protein] + ADP + H(+). The enzyme catalyses L-threonyl-[protein] + ATP = O-phospho-L-threonyl-[protein] + ADP + H(+). With respect to regulation, inhibited by INKA1; which inhibits the serine/threonine-protein kinase activity by binding PAK4 in a substrate-like manner. In terms of biological role, serine/threonine protein kinase that plays a role in a variety of different signaling pathways including cytoskeleton regulation, cell migration, growth, proliferation or cell survival. Activation by various effectors including growth factor receptors or active CDC42 and RAC1 results in a conformational change and a subsequent autophosphorylation on several serine and/or threonine residues. Phosphorylates and inactivates the protein phosphatase SSH1, leading to increased inhibitory phosphorylation of the actin binding/depolymerizing factor cofilin. Decreased cofilin activity may lead to stabilization of actin filaments. Phosphorylates LIMK1, a kinase that also inhibits the activity of cofilin. Phosphorylates integrin beta5/ITGB5 and thus regulates cell motility. Phosphorylates ARHGEF2 and activates the downstream target RHOA that plays a role in the regulation of assembly of focal adhesions and actin stress fibers. Stimulates cell survival by phosphorylating the BCL2 antagonist of cell death BAD. Alternatively, inhibits apoptosis by preventing caspase-8 binding to death domain receptors in a kinase independent manner. Plays a role in cell-cycle progression by controlling levels of the cell-cycle regulatory protein CDKN1A and by phosphorylating RAN. Promotes kinase-independent stabilization of RHOU, thereby contributing to focal adhesion disassembly during cell migration. The protein is Serine/threonine-protein kinase PAK 4 of Mus musculus (Mouse).